The sequence spans 211 residues: Peptide methionine sulfoxide reductase MsrA (211 aa).

Residue cysteine 60 is part of the active site.

The protein belongs to the MsrA Met sulfoxide reductase family.

It catalyses the reaction L-methionyl-[protein] + [thioredoxin]-disulfide + H2O = L-methionyl-(S)-S-oxide-[protein] + [thioredoxin]-dithiol. It carries out the reaction [thioredoxin]-disulfide + L-methionine + H2O = L-methionine (S)-S-oxide + [thioredoxin]-dithiol. In terms of biological role, has an important function as a repair enzyme for proteins that have been inactivated by oxidation. Catalyzes the reversible oxidation-reduction of methionine sulfoxide in proteins to methionine. The chain is Peptide methionine sulfoxide reductase MsrA from Methanosarcina mazei (strain ATCC BAA-159 / DSM 3647 / Goe1 / Go1 / JCM 11833 / OCM 88) (Methanosarcina frisia).